A 113-amino-acid chain; its full sequence is uncharacterized protein (113 aa).

This is an uncharacterized protein from Methanocaldococcus jannaschii (strain ATCC 43067 / DSM 2661 / JAL-1 / JCM 10045 / NBRC 100440) (Methanococcus jannaschii).